Consider the following 225-residue polypeptide: Probable molybdenum cofactor guanylyltransferase (225 aa).

Residues 20 to 22, K33, D88, and D117 contribute to the GTP site; that span reads LAG. Mg(2+) is bound at residue D117.

This sequence belongs to the MobA family. Mg(2+) is required as a cofactor.

The protein localises to the cytoplasm. The enzyme catalyses Mo-molybdopterin + GTP + H(+) = Mo-molybdopterin guanine dinucleotide + diphosphate. Transfers a GMP moiety from GTP to Mo-molybdopterin (Mo-MPT) cofactor (Moco or molybdenum cofactor) to form Mo-molybdopterin guanine dinucleotide (Mo-MGD) cofactor. This chain is Probable molybdenum cofactor guanylyltransferase, found in Methanosarcina acetivorans (strain ATCC 35395 / DSM 2834 / JCM 12185 / C2A).